Reading from the N-terminus, the 612-residue chain is Dihydroxy-acid dehydratase (612 aa).

Asp-81 provides a ligand contact to Mg(2+). Cys-122 is a [2Fe-2S] cluster binding site. Mg(2+) contacts are provided by Asp-123 and Lys-124. Residue Lys-124 is modified to N6-carboxylysine. Cys-193 is a binding site for [2Fe-2S] cluster. Position 489 (Glu-489) interacts with Mg(2+). Catalysis depends on Ser-515, which acts as the Proton acceptor.

It belongs to the IlvD/Edd family. As to quaternary structure, homodimer. [2Fe-2S] cluster serves as cofactor. It depends on Mg(2+) as a cofactor.

The enzyme catalyses (2R)-2,3-dihydroxy-3-methylbutanoate = 3-methyl-2-oxobutanoate + H2O. It carries out the reaction (2R,3R)-2,3-dihydroxy-3-methylpentanoate = (S)-3-methyl-2-oxopentanoate + H2O. The protein operates within amino-acid biosynthesis; L-isoleucine biosynthesis; L-isoleucine from 2-oxobutanoate: step 3/4. Its pathway is amino-acid biosynthesis; L-valine biosynthesis; L-valine from pyruvate: step 3/4. Functions in the biosynthesis of branched-chain amino acids. Catalyzes the dehydration of (2R,3R)-2,3-dihydroxy-3-methylpentanoate (2,3-dihydroxy-3-methylvalerate) into 2-oxo-3-methylpentanoate (2-oxo-3-methylvalerate) and of (2R)-2,3-dihydroxy-3-methylbutanoate (2,3-dihydroxyisovalerate) into 2-oxo-3-methylbutanoate (2-oxoisovalerate), the penultimate precursor to L-isoleucine and L-valine, respectively. The chain is Dihydroxy-acid dehydratase from Pseudomonas paraeruginosa (strain DSM 24068 / PA7) (Pseudomonas aeruginosa (strain PA7)).